Consider the following 521-residue polypeptide: Acetylcholine receptor subunit beta-like 1 (521 aa).

A signal peptide spans 1 to 24 (MESSCKSWLLCSILVLVAFSLVSA). Topologically, residues 25–235 (SEDEERLVRD…ITFYIIIRRK (211 aa)) are extracellular. The N-linked (GlcNAc...) asparagine glycan is linked to Asn48. A disulfide bond links Cys152 and Cys166. The next 3 membrane-spanning stretches (helical) occupy residues 236–260 (TLFY…VFYL), 268–286 (VTLG…LLVS), and 302–323 (YLLF…IINW). Over 324–481 (NFRGPRTHRM…WKYVAMVIDR (158 aa)) the chain is Cytoplasmic. The chain crosses the membrane as a helical span at residues 482–500 (LQLYIFFIVTTAGTVGILM).

It belongs to the ligand-gated ion channel (TC 1.A.9) family. Acetylcholine receptor (TC 1.A.9.1) subfamily. In terms of tissue distribution, CNS in embryos.

The protein resides in the postsynaptic cell membrane. The protein localises to the cell membrane. In terms of biological role, after binding acetylcholine, the AChR responds by an extensive change in conformation that affects all subunits and leads to opening of an ion-conducting channel across the plasma membrane. In Drosophila melanogaster (Fruit fly), this protein is Acetylcholine receptor subunit beta-like 1 (nAChRbeta1).